The chain runs to 36 residues: Amanexitide proprotein 1 (36 aa).

Positions 1 to 10 (MSDINTARLP) are excised as a propeptide. The segment at residues 11 to 19 (VFSLPVFFP) is a cross-link (cyclopeptide (Val-Pro)). A propeptide spanning residues 20–36 (FVSDDIQAVLTRGESLC) is cleaved from the precursor.

The protein belongs to the MSDIN fungal toxin family. Processed by the macrocyclase-peptidase enzyme POPB to yield a toxic cyclic nonapeptide. POPB first removes 10 residues from the N-terminus. Conformational trapping of the remaining peptide forces the enzyme to release this intermediate rather than proceed to macrocyclization. The enzyme rebinds the remaining peptide in a different conformation and catalyzes macrocyclization of the N-terminal 9 residues. In terms of tissue distribution, expressed in basidiocarps.

Cyclic nonapeptide that belongs to the MSDIN-like toxin family responsible for a large number of food poisoning cases and deaths. This chain is Amanexitide proprotein 1, found in Amanita exitialis (Guangzhou destroying angel).